The following is a 487-amino-acid chain: Glycogen synthase 2 (487 aa).

An ADP-alpha-D-glucose-binding site is contributed by Lys-12.

It belongs to the glycosyltransferase 1 family. Bacterial/plant glycogen synthase subfamily.

The catalysed reaction is [(1-&gt;4)-alpha-D-glucosyl](n) + ADP-alpha-D-glucose = [(1-&gt;4)-alpha-D-glucosyl](n+1) + ADP + H(+). It functions in the pathway glycan biosynthesis; glycogen biosynthesis. Its function is as follows. Synthesizes alpha-1,4-glucan chains using ADP-glucose. In Methylococcus capsulatus (strain ATCC 33009 / NCIMB 11132 / Bath), this protein is Glycogen synthase 2.